Here is a 1052-residue protein sequence, read N- to C-terminus: Membrane-bound transcription factor site-1 protease (1052 aa).

Residues M1–G17 form the signal peptide. A propeptide spanning residues K18 to L186 is cleaved from the precursor. Phosphoserine; by FAM20C is present on S168. Topologically, residues R187–V998 are lumenal. Residues P190 to Y472 form the Peptidase S8 domain. Residue D218 is the Charge relay system of the active site. N236 is a glycosylation site (N-linked (GlcNAc...) asparagine). H249 serves as the catalytic Charge relay system. N-linked (GlcNAc...) asparagine glycosylation occurs at N305. S414 acts as the Charge relay system in catalysis. N-linked (GlcNAc...) asparagine glycans are attached at residues N515 and N728. Positions P877–R887 are enriched in polar residues. The interval P877–R899 is disordered. N939 carries an N-linked (GlcNAc...) asparagine glycan. Residues G999–I1021 traverse the membrane as a helical segment. The Cytoplasmic segment spans residues N1022–V1052. The segment covering R1027–R1037 has biased composition (basic residues). The interval R1027 to V1052 is disordered.

Belongs to the peptidase S8 family. Interacts with LYSET; this interaction bridges GNPTAB to MBTPS1. It depends on Ca(2+) as a cofactor. Post-translationally, the 148 kDa zymogen is processed progressively into two membrane-bound 120 and 106 kDa forms in the endoplasmic reticulum, and late into a secreted 98 kDa form. The propeptide is autocatalytically removed through an intramolecular cleavage after Leu-186. Further cleavage generates 14, 10, and 8 kDa intermediates. As to expression, widely expressed.

It is found in the endoplasmic reticulum membrane. The protein localises to the golgi apparatus membrane. The catalysed reaction is Processes precursors containing basic and hydrophobic/aliphatic residues at P4 and P2, respectively, with a relatively relaxed acceptance of amino acids at P1 and P3.. Its activity is regulated as follows. Inhibited by divalent copper and zinc ions, but not by nickel or cobalt. Inhibited by its prosegment, but not smaller fragments. Inhibited by 4-(2-aminoethyl)benzenesulfonyl fluoride (AEBSF), a serine protease inhibitor. Functionally, serine protease that cleaves after hydrophobic or small residues, provided that Arg or Lys is in position P4: known substrates include SREBF1/SREBP1, SREBF2/SREBP2, BDNF, GNPTAB, ATF6, ATF6B and FAM20C. Cleaves substrates after Arg-Ser-Val-Leu (SREBP2), Arg-His-Leu-Leu (ATF6), Arg-Gly-Leu-Thr (BDNF) and its own propeptide after Arg-Arg-Leu-Leu. Catalyzes the first step in the proteolytic activation of the sterol regulatory element-binding proteins (SREBPs) SREBF1/SREBP1 and SREBF2/SREBP2. Also mediates the first step in the proteolytic activation of the cyclic AMP-dependent transcription factor ATF-6 (ATF6 and ATF6B). Mediates the protein cleavage of GNPTAB into subunit alpha and beta, thereby participating in biogenesis of lysosomes. Cleaves the propeptide from FAM20C which is required for FAM20C secretion from the Golgi apparatus membrane and for enhancement of FAM20C kinase activity, promoting osteoblast differentiation and biomineralization. Involved in the regulation of M6P-dependent Golgi-to-lysosome trafficking of lysosomal enzymes. It is required for the activation of CREB3L2/BBF2H7, a transcriptional activator of MIA3/TANGO and other genes controlling mega vesicle formation. Therefore, it plays a key role in the regulation of mega vesicle-mediated collagen trafficking. In astrocytes and osteoblasts, upon DNA damage and ER stress, mediates the first step of the regulated intramembrane proteolytic activation of the transcription factor CREB3L1, leading to the inhibition of cell-cycle progression. This Homo sapiens (Human) protein is Membrane-bound transcription factor site-1 protease.